The primary structure comprises 322 residues: Mycothiol acetyltransferase (322 aa).

N-acetyltransferase domains follow at residues 5 to 150 and 160 to 322; these read SWLR…DPDD and VTIR…PARG. Glu36 contributes to the 1D-myo-inositol 2-(L-cysteinylamino)-2-deoxy-alpha-D-glucopyranoside binding site. Acetyl-CoA is bound by residues 79-81 and 87-92; these read LVV and RRGVGT. Positions 187, 226, and 252 each coordinate 1D-myo-inositol 2-(L-cysteinylamino)-2-deoxy-alpha-D-glucopyranoside. Residue 256 to 258 coordinates acetyl-CoA; sequence VGV. Tyr290 is a 1D-myo-inositol 2-(L-cysteinylamino)-2-deoxy-alpha-D-glucopyranoside binding site. Residue 295-300 coordinates acetyl-CoA; that stretch reads NARAVR.

This sequence belongs to the acetyltransferase family. MshD subfamily. Monomer.

It catalyses the reaction 1D-myo-inositol 2-(L-cysteinylamino)-2-deoxy-alpha-D-glucopyranoside + acetyl-CoA = mycothiol + CoA + H(+). Its function is as follows. Catalyzes the transfer of acetyl from acetyl-CoA to desacetylmycothiol (Cys-GlcN-Ins) to form mycothiol. The protein is Mycothiol acetyltransferase of Parafrankia sp. (strain EAN1pec).